The sequence spans 319 residues: Plasmodesmata-located protein 4 (319 aa).

An N-terminal signal peptide occupies residues 1–26 (MVVHLISLLTQTLALIILSLPSIINT). Residues 27–288 (SQLDYDTLVF…EGSKVNTGKS (262 aa)) are Extracellular-facing. 6 cysteine pairs are disulfide-bonded: Cys39/Cys127, Cys103/Cys112, Cys115/Cys140, Cys177/Cys247, Cys223/Cys232, and Cys235/Cys260. 2 Gnk2-homologous domains span residues 45–149 (NILQ…FERI) and 170–269 (HGLI…YHPH). A helical transmembrane segment spans residues 289–309 (LAIVVGGVAALVFVAIFFMFL). The interval 289–309 (LAIVVGGVAALVFVAIFFMFL) is necessary and sufficient for plasmodesmal targeting. Residues 310 to 319 (KSLRKKGDDC) are Cytoplasmic-facing.

This sequence belongs to the cysteine-rich repeat secretory protein family. Plasmodesmata-located proteins (PDLD) subfamily. As to quaternary structure, (Microbial infection) Interacts with Grapevine fanleaf virus (GFLV) 2B-MP. Highly expressed in seeds and roots.

The protein localises to the cell membrane. It is found in the cell junction. The protein resides in the plasmodesma. Functionally, modulates cell-to-cell trafficking. The protein is Plasmodesmata-located protein 4 of Arabidopsis thaliana (Mouse-ear cress).